An 87-amino-acid chain; its full sequence is Type 3 secretion system needle filament protein (87 aa).

Belongs to the SctF family. As to quaternary structure, the core secretion machinery of the T3SS is composed of approximately 20 different proteins, including cytoplasmic components, a base, an export apparatus and a needle. This subunit polymerizes and forms the helical needle filament. Forms high-order oligomers in vitro. Forms a stable ternary complex with the YscE-YscG chaperone. Interacts directly with YscG but makes very little direct contact with YscE. Interacts with the needle adapter protein YscI/SctI.

Its subcellular location is the secreted. It localises to the cell surface. The secretion and/or polymerization may be controlled by the type III secretion system regulator YopR. Interaction with YscE-YscG chaperone prevents premature polymerization of YscF/SctF in the bacterial cytosol and is required for its stability and efficient secretion. Interaction with the needle adapter protein YscI/SctI is required for YscF/SctF secretion, needle assembly and Yop secretion. The N-terminus varies among bacterial species, not only in amino acid composition but also in the number of amino acids, and may function in manipulating the host response to the advantage of the bacteria. In Y.pestis, the N-terminus can function to decrease cytokine induction, perhaps contributing to a favorable immune environment leading to survival of Y.pestis within the eukaryotic host. Its function is as follows. Component of the type III secretion system (T3SS), also called injectisome, which is used to inject bacterial effector proteins into eukaryotic host cells. YscF/SctF forms the external needle filament that protrudes from the bacterial surface. Essential for the calcium-dependent regulation of T3SS and Yop secretion. Required to block Yop secretion in the presence of extracellular calcium. May be the extracellular T3SS component that senses extracellular calcium and/or participates in transmitting the calcium signal to the cytoplasmic compartment where the block in secretion is initiated. During infection, can induce innate immune responses. The needle proteins interact with host TLR2 or TLR4, and induce signaling by NF-kappa-B and/or AP-1. This activation is MyD88 dependent and results in increased expression of cytokines, including TNF-alpha, IL-6 and IL-8. Innate immune responses are modulated by the N-terminal region of YscF/SctF. The polypeptide is Type 3 secretion system needle filament protein (Yersinia pestis).